The following is a 326-amino-acid chain: Adenosine receptor A1 (326 aa).

Residues 1–10 are Extracellular-facing; sequence MPPYISAFQA. The chain crosses the membrane as a helical span at residues 11–33; that stretch reads AYIGIEVLIALVSVPGNVLVIWA. Topologically, residues 34-46 are cytoplasmic; the sequence is VKVNQALRDATFC. A helical membrane pass occupies residues 47–69; sequence FIVSLAVADVAVGALVIPLAILI. Residues 70 to 80 are Extracellular-facing; it reads NIGPQTYFHTC. A disulfide bridge links cysteine 80 with cysteine 169. Residues 81–102 form a helical membrane-spanning segment; the sequence is LMVACPVLILTQSSILALLAIA. Residues 103–123 are Cytoplasmic-facing; sequence VDRYLRVKIPLRYKTVVTQRR. A helical membrane pass occupies residues 124 to 146; it reads AAVAIAGCWILSLVVGLTPMFGW. Residues 147 to 176 lie on the Extracellular side of the membrane; it reads NNLSVVEQDWRANGSVGEPVIKCEFEKVIS. N-linked (GlcNAc...) asparagine glycans are attached at residues asparagine 148 and asparagine 159. The helical transmembrane segment at 177–201 threads the bilayer; the sequence is MEYMVYFNFFVWVLPPLLLMVLIYL. Residues 202–235 lie on the Cytoplasmic side of the membrane; that stretch reads EVFYLIRKQLNKKVSASSGDPQKYYGKELKIAKS. Residues 236–259 form a helical membrane-spanning segment; sequence LALILFLFALSWLPLHILNCITLF. At 260-267 the chain is on the extracellular side; that stretch reads CPTCQKPS. The helical transmembrane segment at 268–292 threads the bilayer; sequence ILIYIAIFLTHGNSAMNPIVYAFRI. The Cytoplasmic segment spans residues 293–326; the sequence is HKFRVTFLKIWNDHFRCQPKPPIDEDLPEEKAED. Cysteine 309 is lipidated: S-palmitoyl cysteine.

This sequence belongs to the G-protein coupled receptor 1 family. In terms of tissue distribution, widely expressed in brain and spinal cord.

The protein resides in the cell membrane. In terms of biological role, receptor for adenosine. The activity of this receptor is mediated by G proteins which inhibit adenylyl cyclase. This is Adenosine receptor A1 (Adora1) from Rattus norvegicus (Rat).